Reading from the N-terminus, the 262-residue chain is Small ribosomal subunit protein mS23 (262 aa).

Acidic residues predominate over residues 242-254; sequence AAEEQETSLDDDA. Positions 242–262 are disordered; it reads AAEEQETSLDDDATEKVAVAA.

This sequence belongs to the mitochondrion-specific ribosomal protein mS23 family. Component of the mitochondrial small ribosomal subunit.

It is found in the mitochondrion. This Aspergillus niger (strain ATCC MYA-4892 / CBS 513.88 / FGSC A1513) protein is Small ribosomal subunit protein mS23 (rsm25).